The primary structure comprises 88 residues: Elongation factor 1-beta (88 aa).

Belongs to the EF-1-beta/EF-1-delta family.

Functionally, promotes the exchange of GDP for GTP in EF-1-alpha/GDP, thus allowing the regeneration of EF-1-alpha/GTP that could then be used to form the ternary complex EF-1-alpha/GTP/AAtRNA. The sequence is that of Elongation factor 1-beta from Haloarcula marismortui (strain ATCC 43049 / DSM 3752 / JCM 8966 / VKM B-1809) (Halobacterium marismortui).